Consider the following 369-residue polypeptide: S-(hydroxymethyl)glutathione dehydrogenase (369 aa).

Positions 40, 62, 92, 95, 98, 106, and 169 each coordinate Zn(2+).

It belongs to the zinc-containing alcohol dehydrogenase family. Class-III subfamily. As to quaternary structure, homodimer. Requires Zn(2+) as cofactor.

The protein localises to the cytoplasm. It catalyses the reaction S-(hydroxymethyl)glutathione + NADP(+) = S-formylglutathione + NADPH + H(+). It carries out the reaction S-(hydroxymethyl)glutathione + NAD(+) = S-formylglutathione + NADH + H(+). The catalysed reaction is a primary alcohol + NAD(+) = an aldehyde + NADH + H(+). The enzyme catalyses a secondary alcohol + NAD(+) = a ketone + NADH + H(+). It catalyses the reaction S-nitrosoglutathione + NADH + H(+) = S-(hydroxysulfenamide)glutathione + NAD(+). Has high formaldehyde dehydrogenase activity in the presence of glutathione and catalyzes the oxidation of normal alcohols in a reaction that is not GSH-dependent. In addition, hemithiolacetals other than those formed from GSH, including omega-thiol fatty acids, also are substrates. Also acts as a S-nitroso-glutathione reductase by catalyzing the NADH-dependent reduction of S-nitrosoglutathione. The protein is S-(hydroxymethyl)glutathione dehydrogenase (frmA) of Escherichia coli (strain ATCC 8739 / DSM 1576 / NBRC 3972 / NCIMB 8545 / WDCM 00012 / Crooks).